A 625-amino-acid polypeptide reads, in one-letter code: Chaperone protein DnaK (625 aa).

The residue at position 197 (Thr-197) is a Phosphothreonine; by autocatalysis. The tract at residues 598–625 (AYAKEQGGTQQGTDTKKKDDDVIDAEVE) is disordered.

It belongs to the heat shock protein 70 family.

Acts as a chaperone. This is Chaperone protein DnaK from Helicobacter hepaticus (strain ATCC 51449 / 3B1).